A 200-amino-acid polypeptide reads, in one-letter code: Dual-action ribosomal maturation protein DarP (200 aa).

Disordered stretches follow at residues 1-25 (MTRK…DRPS) and 177-200 (TASG…DDEA). Over residues 12–25 (HAAEVDDNGYDRPS) the composition is skewed to basic and acidic residues. Over residues 184–200 (GDDEAADEAGDDHDDEA) the composition is skewed to acidic residues.

This sequence belongs to the DarP family.

The protein localises to the cytoplasm. Member of a network of 50S ribosomal subunit biogenesis factors which assembles along the 30S-50S interface, preventing incorrect 23S rRNA structures from forming. Promotes peptidyl transferase center (PTC) maturation. In Burkholderia ambifaria (strain MC40-6), this protein is Dual-action ribosomal maturation protein DarP.